The chain runs to 719 residues: Pesticidal crystal protein Cry1Ic (719 aa).

The protein belongs to the delta endotoxin family.

Functionally, promotes colloidosmotic lysis by binding to the midgut epithelial cells of insects. The chain is Pesticidal crystal protein Cry1Ic (cry1Ic) from Bacillus thuringiensis.